We begin with the raw amino-acid sequence, 130 residues long: Probable 4-amino-4-deoxy-L-arabinose-phosphoundecaprenol flippase subunit ArnF (130 aa).

Residues 1–4 lie on the Cytoplasmic side of the membrane; it reads MRGY. A helical transmembrane segment spans residues 5 to 25; sequence AWGAASVLLVTLAQLLMKWGM. Residues 26 to 47 lie on the Periplasmic side of the membrane; that stretch reads AQIPLMSFADVTLNLFMQYWLP. Residues 48–68 traverse the membrane as a helical segment; sequence LVVVSGGIFGYALSMLCWFFA. Residues 69-77 are Cytoplasmic-facing; sequence LHHLPLNRA. The helical transmembrane segment at 78–98 threads the bilayer; that stretch reads YPLLSVSYALVYLAAVILPWF. N99 is a topological domain (periplasmic). Residues 100–120 traverse the membrane as a helical segment; that stretch reads ESATLLKTLGTLFILFGVWLI. Over 121–130 the chain is Cytoplasmic; that stretch reads NSQAKVKTPQ.

The protein belongs to the ArnF family. Heterodimer of ArnE and ArnF.

The protein resides in the cell inner membrane. Its pathway is bacterial outer membrane biogenesis; lipopolysaccharide biosynthesis. Its function is as follows. Translocates 4-amino-4-deoxy-L-arabinose-phosphoundecaprenol (alpha-L-Ara4N-phosphoundecaprenol) from the cytoplasmic to the periplasmic side of the inner membrane. In Serratia proteamaculans (strain 568), this protein is Probable 4-amino-4-deoxy-L-arabinose-phosphoundecaprenol flippase subunit ArnF.